The chain runs to 603 residues: MSSEHIQNKLALLPDQPGCYLMKDRQGTIIYVGKAKVLKNRVRSYFSGTHDSKTQRLVQEIVDFEYIVTSSNVEALLLEINLIKKHDPRFNIRLKDDKTYPFIKITNERHPRLIITRQVKKDKGKYFGPYPNVYAANEVKRILDRLYPLRKCSTLPNKVCLYYHLGQCLAPCVFDVEASKYKEMQDEIVAFLNGGYKTVKNDLMKKMQVAAENMEFEKAGEFRDQINAIETTMEKQKMTMNDFVDRDVFGYAIDKGWMCVQVFFIRQGKLIERDVSQFPFYNDADEDFLTFIGQFYQKANHIPPKEIYLPDDVDSEAVQAVVPDTKIIVPQRGNKKELVKLAYKNAKIALNEKFMLLERNEERTVGAVERLGEAMGIPTPSRVEAFDNSNIHGTDPVSAMVTFLDGKPSKNDYRKYKIKTVEGPDDYATMREVIRRRYWRVLKERLPMPDLILIDGGKGQIDSAKDVLINELGLDIPVAGLAKDDKHRTSQLLFGDPLEIVPLERNSQEFYLLQRMQDEVHRFAITFHRQLRSKTGFQSILDGIPGVGPGRKKKLLKHFGSMKKLKEASVEEIKEAGVPMNVAEEVHKHITTFNEKAKNTEQK.

One can recognise a GIY-YIG domain in the interval 15-92 (DQPGCYLMKD…IKKHDPRFNI (78 aa)). The region spanning 197–232 (KTVKNDLMKKMQVAAENMEFEKAGEFRDQINAIETT) is the UVR domain.

Belongs to the UvrC family. As to quaternary structure, interacts with UvrB in an incision complex.

The protein resides in the cytoplasm. Its function is as follows. The UvrABC repair system catalyzes the recognition and processing of DNA lesions. UvrC both incises the 5' and 3' sides of the lesion. The N-terminal half is responsible for the 3' incision and the C-terminal half is responsible for the 5' incision. The chain is UvrABC system protein C from Listeria welshimeri serovar 6b (strain ATCC 35897 / DSM 20650 / CCUG 15529 / CIP 8149 / NCTC 11857 / SLCC 5334 / V8).